The sequence spans 150 residues: Protein Smg homolog (150 aa).

The protein belongs to the Smg family.

In Methylobacillus flagellatus (strain ATCC 51484 / DSM 6875 / VKM B-1610 / KT), this protein is Protein Smg homolog.